Here is a 182-residue protein sequence, read N- to C-terminus: Lipid A acyltransferase PagP (182 aa).

Positions 1-21 (MTQYFRALAFFLLLVPATAMA) are cleaved as a signal peptide. A lipid anchor (N-palmitoyl cysteine) is attached at cysteine 22. A lipid anchor (S-diacylglycerol cysteine) is attached at cysteine 22. Residues histidine 55, aspartate 98, and serine 99 contribute to the active site.

The protein belongs to the lipid A palmitoyltransferase family. In terms of assembly, homodimer.

The protein localises to the cell outer membrane. The enzyme catalyses a lipid A + a 1,2-diacyl-sn-glycero-3-phosphocholine = a hepta-acyl lipid A + a 2-acyl-sn-glycero-3-phosphocholine. It carries out the reaction a lipid IVA + a 1,2-diacyl-sn-glycero-3-phosphocholine = a lipid IVB + a 2-acyl-sn-glycero-3-phosphocholine. It catalyses the reaction a lipid IIA + a 1,2-diacyl-sn-glycero-3-phosphocholine = a lipid IIB + a 2-acyl-sn-glycero-3-phosphocholine. Functionally, transfers a fatty acid residue from the sn-1 position of a phospholipid to the N-linked hydroxyfatty acid chain on the proximal unit of lipid A or its precursors. Required for resistance to cationic antimicrobial peptides (CAMPs). Modifications of lipid A with an acyl chain to evade host immune defenses by resisting antibody-mediated complement lysis during respiratory infection. The polypeptide is Lipid A acyltransferase PagP (Bordetella bronchiseptica (strain ATCC BAA-588 / NCTC 13252 / RB50) (Alcaligenes bronchisepticus)).